Here is a 245-residue protein sequence, read N- to C-terminus: Transmembrane protein 116 (245 aa).

A run of 4 helical transmembrane segments spans residues 24 to 44, 88 to 108, 141 to 161, and 173 to 195; these read MAFVFSSLIPLLLMTPVFCLG, GIAIFLGSFVLSLLTIMVLLI, FYPVAFFCCWGPAVILMIIKL, and LYVLQALTATSQGLLNCGVYGWT.

It localises to the membrane. This chain is Transmembrane protein 116 (TMEM116), found in Homo sapiens (Human).